The sequence spans 301 residues: tRNA pseudouridine synthase B (301 aa).

Aspartate 38 functions as the Nucleophile in the catalytic mechanism.

This sequence belongs to the pseudouridine synthase TruB family. Type 1 subfamily.

The enzyme catalyses uridine(55) in tRNA = pseudouridine(55) in tRNA. Its function is as follows. Responsible for synthesis of pseudouridine from uracil-55 in the psi GC loop of transfer RNAs. This Lacticaseibacillus paracasei (strain ATCC 334 / BCRC 17002 / CCUG 31169 / CIP 107868 / KCTC 3260 / NRRL B-441) (Lactobacillus paracasei) protein is tRNA pseudouridine synthase B.